We begin with the raw amino-acid sequence, 189 residues long: Peptidyl-tRNA hydrolase (189 aa).

Y15 is a binding site for tRNA. Residue H20 is the Proton acceptor of the active site. Positions 66, 68, and 114 each coordinate tRNA.

It belongs to the PTH family. Monomer.

It localises to the cytoplasm. The catalysed reaction is an N-acyl-L-alpha-aminoacyl-tRNA + H2O = an N-acyl-L-amino acid + a tRNA + H(+). Hydrolyzes ribosome-free peptidyl-tRNAs (with 1 or more amino acids incorporated), which drop off the ribosome during protein synthesis, or as a result of ribosome stalling. Functionally, catalyzes the release of premature peptidyl moieties from peptidyl-tRNA molecules trapped in stalled 50S ribosomal subunits, and thus maintains levels of free tRNAs and 50S ribosomes. The sequence is that of Peptidyl-tRNA hydrolase from Streptococcus pneumoniae (strain P1031).